The following is a 331-amino-acid chain: Probable inactive O-methyltransferase 11 (331 aa).

S-adenosyl-L-methionine-binding positions include glycine 179, aspartate 202, 224–226 (GDF), aspartate 225, phenylalanine 226, and lysine 239.

Belongs to the class I-like SAM-binding methyltransferase superfamily. Cation-independent O-methyltransferase family. COMT subfamily.

This Dictyostelium discoideum (Social amoeba) protein is Probable inactive O-methyltransferase 11 (omt11).